Here is a 458-residue protein sequence, read N- to C-terminus: Sphingomyelinase DDB_G0288017 (458 aa).

The interval 91-111 (NKKAKSPPPPSSLKQQNLHNN) is disordered. Glu135 provides a ligand contact to Mg(2+). The active-site Proton acceptor is His447.

This sequence belongs to the neutral sphingomyelinase family. It depends on Mg(2+) as a cofactor.

The catalysed reaction is a sphingomyelin + H2O = phosphocholine + an N-acylsphing-4-enine + H(+). The protein operates within lipid metabolism; sphingolipid metabolism. Functionally, catalyzes the hydrolysis of sphingomyelin to form ceramide and phosphocholine. In Dictyostelium discoideum (Social amoeba), this protein is Sphingomyelinase DDB_G0288017.